The primary structure comprises 785 residues: Protein translocase subunit SecA 3 (785 aa).

Residues glutamine 98, 116-120 (GEGKT), and aspartate 505 contribute to the ATP site.

Belongs to the SecA family. As to quaternary structure, monomer and homodimer. Part of the essential Sec protein translocation apparatus which comprises SecA, SecYEG and auxiliary proteins SecDF. Other proteins may also be involved.

The protein resides in the cell membrane. It localises to the cytoplasm. The enzyme catalyses ATP + H2O + cellular proteinSide 1 = ADP + phosphate + cellular proteinSide 2.. Its function is as follows. Part of the Sec protein translocase complex. Interacts with the SecYEG preprotein conducting channel. Has a central role in coupling the hydrolysis of ATP to the transfer of proteins into and across the cell membrane, serving as an ATP-driven molecular motor driving the stepwise translocation of polypeptide chains across the membrane. This chain is Protein translocase subunit SecA 3, found in Mycolicibacterium vanbaalenii (strain DSM 7251 / JCM 13017 / BCRC 16820 / KCTC 9966 / NRRL B-24157 / PYR-1) (Mycobacterium vanbaalenii).